The chain runs to 421 residues: Voltage-dependent calcium channel gamma-8 subunit (421 aa).

Helical transmembrane passes span 19-39 (VQVLLTTIGAFAAFGLMTIAI), 127-147 (SSIFPILSAILLLLGGVCVAA), 157-177 (IILGAGILFVAAGLSNIIGVI), and 207-227 (FGGLSFILAEVIGVLAVNIYI). Residues S251 and S254 each carry the phosphoserine modification. The tract at residues 271-304 (RRSRSSSRGSSEASPSRDASPGGPGGPGFASTDI) is disordered. The segment covering 276–287 (SSRGSSEASPSR) has biased composition (low complexity). The chain crosses the membrane as a helical span at residues 318 to 338 (VAAGLASAGGGGGGAGVGAYG). Disordered regions lie at residues 342–363 (GAAGGGGTGSERDRGSSAGFLT) and 378–421 (VTVT…TTPV). The segment covering 384–397 (PAAPAPAPPAPAAP) has biased composition (pro residues). Residues 408 to 421 (ASNTNTLNRKTTPV) show a composition bias toward polar residues.

The protein belongs to the PMP-22/EMP/MP20 family. CACNG subfamily. In terms of assembly, interacts with CACNA1C. Identified in a complex with the L-type calcium channel subunits CACNA1C, CACNA2D1 and either CACNB1 or CACNB2. Acts as an auxiliary subunit for AMPA-selective glutamate receptors (AMPARs). Found in a complex with GRIA1, GRIA2, GRIA3, GRIA4, CNIH2, CNIH3, CACNG2, CACNG3, CACNG4, CACNG5 and CACNG7. Interacts with CNIH2. Found in a complex with GRIA1, GRIA2, GRIA3, GRIA4, DLG4 and CNIH2. Post-translationally, palmitoylated. Probably palmitoylated by ZDHHC3 and ZDHHC7.

The protein localises to the cell membrane. It localises to the postsynaptic density membrane. In terms of biological role, regulates the activity of L-type calcium channels that contain CACNA1C as pore-forming subunit. Regulates the trafficking and gating properties of AMPA-selective glutamate receptors (AMPARs). Promotes their targeting to the cell membrane and synapses and modulates their gating properties by slowing their rates of activation, deactivation and desensitization and by mediating their resensitization. Does not show subunit-specific AMPA receptor regulation and regulates all AMPAR subunits. Thought to stabilize the calcium channel in an inactivated (closed) state. This Rattus norvegicus (Rat) protein is Voltage-dependent calcium channel gamma-8 subunit.